A 239-amino-acid chain; its full sequence is Ribonuclease PH (239 aa).

Phosphate-binding positions include Arg87 and 125 to 127 (GTR).

The protein belongs to the RNase PH family. Homohexameric ring arranged as a trimer of dimers.

The catalysed reaction is tRNA(n+1) + phosphate = tRNA(n) + a ribonucleoside 5'-diphosphate. Functionally, phosphorolytic 3'-5' exoribonuclease that plays an important role in tRNA 3'-end maturation. Removes nucleotide residues following the 3'-CCA terminus of tRNAs; can also add nucleotides to the ends of RNA molecules by using nucleoside diphosphates as substrates, but this may not be physiologically important. Probably plays a role in initiation of 16S rRNA degradation (leading to ribosome degradation) during starvation. This chain is Ribonuclease PH, found in Azotobacter vinelandii (strain DJ / ATCC BAA-1303).